The sequence spans 180 residues: MGLTISSLFSRLFGKKQMRILMVGLDAAGKTTILYKLKLGEIVTTIPTIGFNVETVEYKNICFTVWDVGGQDRIRPLWKHYFQNTQGLIFVVDSNDRERIQEVADELQKMLLVDELRDAVLLLFANKQDLPNAMAISEMTDKLGLQSLRNRTWYVQATCATQGTGLYEGLDWLSNELSKR.

Glycine 2 is lipidated: N-myristoyl glycine. Residues 24–31 (GLDAAGKT), 67–71 (DVGGQ), and 126–129 (NKQD) contribute to the GTP site. Residue serine 147 is modified to Phosphoserine.

Belongs to the small GTPase superfamily. Arf family. As to quaternary structure, forms a complex containing RAB11A, ASAP1, RAB3IP, RAP11FIP3 and ARF4; the complex promotes preciliary trafficking; the complex binds to RHO in photoreceptor cells and promotes RHO ciliary transport.

It is found in the golgi apparatus. It localises to the membrane. Functionally, GTP-binding protein that functions as an allosteric activator of the cholera toxin catalytic subunit, an ADP-ribosyltransferase. Involved in protein trafficking; may modulate vesicle budding and uncoating within the Golgi apparatus. Part of the ciliary targeting complex containing Rab11, ASAP1, Rabin8/RAB3IP, RAB11FIP3 and ARF4, which direct preciliary vesicle trafficking to mother centriole and ciliogenesis initiation. This chain is ADP-ribosylation factor 4 (ARF4), found in Homo sapiens (Human).